Consider the following 66-residue polypeptide: UPF0337 protein BA_0987/GBAA_0987/BAS0923 (66 aa).

A disordered region spans residues 1–22 (MSESGLKEQITGKVEKTKGQVK). Over residues 13–22 (KVEKTKGQVK) the composition is skewed to basic and acidic residues.

It belongs to the UPF0337 (CsbD) family.

The sequence is that of UPF0337 protein BA_0987/GBAA_0987/BAS0923 from Bacillus anthracis.